The chain runs to 273 residues: Large ribosomal subunit protein uL2 (273 aa).

Positions 224 to 260 (AMNPVDHPHGGGEGKTSGGRHPVTPWGKKTKGKKTRK) are disordered. Positions 251-260 (KKTKGKKTRK) are enriched in basic residues.

The protein belongs to the universal ribosomal protein uL2 family. Part of the 50S ribosomal subunit. Forms a bridge to the 30S subunit in the 70S ribosome.

Its function is as follows. One of the primary rRNA binding proteins. Required for association of the 30S and 50S subunits to form the 70S ribosome, for tRNA binding and peptide bond formation. It has been suggested to have peptidyltransferase activity; this is somewhat controversial. Makes several contacts with the 16S rRNA in the 70S ribosome. This Orientia tsutsugamushi (strain Ikeda) (Rickettsia tsutsugamushi) protein is Large ribosomal subunit protein uL2.